We begin with the raw amino-acid sequence, 368 residues long: 1-deoxy-D-xylulose 5-phosphate reductoisomerase (368 aa).

Thr7, Gly8, Ser9, Ile10, Gly31, Lys32, Asn33, and Asn113 together coordinate NADPH. Lys114 is a 1-deoxy-D-xylulose 5-phosphate binding site. Glu115 is a binding site for NADPH. Residue Asp133 participates in Mn(2+) binding. Residues Ser134, Glu135, Ser158, and His181 each contribute to the 1-deoxy-D-xylulose 5-phosphate site. Glu135 lines the Mn(2+) pocket. Residue Gly187 participates in NADPH binding. 1-deoxy-D-xylulose 5-phosphate contacts are provided by Ser194, Asn199, Lys200, and Glu203. A Mn(2+)-binding site is contributed by Glu203.

The protein belongs to the DXR family. Mg(2+) serves as cofactor. Requires Mn(2+) as cofactor.

It carries out the reaction 2-C-methyl-D-erythritol 4-phosphate + NADP(+) = 1-deoxy-D-xylulose 5-phosphate + NADPH + H(+). It functions in the pathway isoprenoid biosynthesis; isopentenyl diphosphate biosynthesis via DXP pathway; isopentenyl diphosphate from 1-deoxy-D-xylulose 5-phosphate: step 1/6. In terms of biological role, catalyzes the NADPH-dependent rearrangement and reduction of 1-deoxy-D-xylulose-5-phosphate (DXP) to 2-C-methyl-D-erythritol 4-phosphate (MEP). The chain is 1-deoxy-D-xylulose 5-phosphate reductoisomerase from Helicobacter pylori (strain P12).